A 734-amino-acid chain; its full sequence is MALRFPRFSQGLAQDPTTRRIWFGIATAHDFESHDDITEERLYQNIFASHFGQLAIIFLWTSGNLFHVAWQGNFEAWVQDPLHVRPIAHAIWDPHFGQPAVEAFTRGGALGPVNIAYSGVYQWWYTIGLRTNGDLYNGALFLLFISAISLIAGWLHLQPKWKPSVSWFKNAESRLNHHLSGLFGVSSLAWTGHLVHVAIPGSRGEYVRWNNFLDVLPHPQGLGPLFTGQWNLYAQNPDSSSHLFGNSQGAGTAILTLLGGFHPQTQSLWLTDIAHHHLAIAFIFLIAGHMYRTNFGIGHSIKNLLEAHIPPGGRLGRGHKGLYDTINNSIHFQLGLALASLGVITSLVAQHMYSLPAYAFIAQDFTTQAALYTHHQYIAGFIMTGAFAHGAIFFIRDYNPEQNEDNVLARMLDHKEAIISHLSWASLFLGFHTLGLYVHNDVMLAFGTPEKQILIEPIFAQWIQSAHGKTSYGFDVLLSSTNGPAFNAGRSIWLPGWLNAINENSNSLFLTIGPGDFLVHHAIALGLHTTTLILVKGALDARGSKLMPDKKDFGYSFPCDGPGRGGTCDISAWDAFYLAVFWMLNTIGWVTFYWHWKHITLWQGNVSQFNESSTYLMGWLRDYLWLNSSQLINGYNPFGMNSLSVWAWMFLFGHLVWATGFMFLISWRGYWQELIETLAWAHERTPLANLIRWRDKPVALSIVQARLVGLAHFSVGYIFTYAAFLIASTSGKFG.

8 consecutive transmembrane segments (helical) span residues 46–69 (IFAS…FHVA), 135–158 (LYNG…LHLQ), 175–199 (LNHH…HVAI), 273–291 (IAHH…GHMY), 330–353 (IHFQ…QHMY), 369–395 (AALY…IFFI), 417–439 (AIIS…LYVH), and 517–535 (FLVH…LILV). Residues C559 and C568 each coordinate [4Fe-4S] cluster. Transmembrane regions (helical) follow at residues 575–596 (AFYL…YWHW) and 643–665 (LSVW…MFLI). Residues H654, M662, and Y670 each coordinate chlorophyll a. A phylloquinone-binding site is contributed by W671. A helical membrane pass occupies residues 707–727 (LVGLAHFSVGYIFTYAAFLIA).

Belongs to the PsaA/PsaB family. As to quaternary structure, the PsaA/B heterodimer binds the P700 chlorophyll special pair and subsequent electron acceptors. PSI consists of a core antenna complex that captures photons, and an electron transfer chain that converts photonic excitation into a charge separation. The eukaryotic PSI reaction center is composed of at least 11 subunits. P700 is a chlorophyll a/chlorophyll a' dimer, A0 is one or more chlorophyll a, A1 is one or both phylloquinones and FX is a shared 4Fe-4S iron-sulfur center. is required as a cofactor.

The protein resides in the plastid. The protein localises to the chloroplast thylakoid membrane. The enzyme catalyses reduced [plastocyanin] + hnu + oxidized [2Fe-2S]-[ferredoxin] = oxidized [plastocyanin] + reduced [2Fe-2S]-[ferredoxin]. In terms of biological role, psaA and PsaB bind P700, the primary electron donor of photosystem I (PSI), as well as the electron acceptors A0, A1 and FX. PSI is a plastocyanin-ferredoxin oxidoreductase, converting photonic excitation into a charge separation, which transfers an electron from the donor P700 chlorophyll pair to the spectroscopically characterized acceptors A0, A1, FX, FA and FB in turn. Oxidized P700 is reduced on the lumenal side of the thylakoid membrane by plastocyanin. The sequence is that of Photosystem I P700 chlorophyll a apoprotein A2 from Morus indica (Mulberry).